A 123-amino-acid chain; its full sequence is rRNA-processing protein cgr-1 (123 aa).

The segment covering 1-13 (MSSTTTTTQTTSQ) has biased composition (low complexity). Disordered regions lie at residues 1 to 47 (MSST…GLTS) and 85 to 123 (EKRAKKEEKERYEKMAEKMHKKRVERLKRKEKRNKLINS). Residues 49-110 (EKRAKERQLL…EKMHKKRVER (62 aa)) adopt a coiled-coil conformation. Residues 85–102 (EKRAKKEEKERYEKMAEK) show a composition bias toward basic and acidic residues. Positions 103-123 (MHKKRVERLKRKEKRNKLINS) are enriched in basic residues.

The protein belongs to the CGR1 family.

The protein resides in the nucleus. It localises to the nucleolus. Its function is as follows. Involved in nucleolar integrity and required for processing of the pre-rRNA for the 60S ribosome subunit. In Neurospora crassa (strain ATCC 24698 / 74-OR23-1A / CBS 708.71 / DSM 1257 / FGSC 987), this protein is rRNA-processing protein cgr-1 (cgr-1).